The chain runs to 1916 residues: MSKDFSDKKKHTIDRIDQHILRRSQHDNYSNGSSPWMKTNLPPPSPQAHMHIQSDLSPTPKRRKLASSSDCENKQFDLSAINKNLYPEDTGSRLMQSLPELSASNSDNVSPVTKSVAFSDRIESSPIYRIPGSSPKPSPSSKPGKSILRNRLPSVRTVSDLSYNKLQYTQHKLHNGNIFTSPYKETRVNPRALEYWVSGEIHGLVDNESVSEFKEIIEGGLGILRQESEDYVARRFEVYATFNNIIPILTTKNVNEVDQKFNILIVNIESIIEICIPHLQIAQDTLLSSSEKKNPFVIRLYVQIVRFFSAIMSNFKIVKWLTKRPDLVNKLKVIYRWTTGALRNENSNKIIITAQVSFLRDEKFGTFFLSNEEIKPIISTFTEIMEINSHNLIYEKLLLIRGFLSKYPKLMIETVTSWLPGEVLPRIIIGDEIYSMKILITSIVVLLELLKKCLDFVDEHERIYQCIMLSPVCETIPEKFLSKLPLNSYDSANLDKVTIGHLLTQQIKNYIVVKNDNKIAMDLWLSMTGLLYDSGKRVYDLTSESNKVWFDLNNLCFINNHPKTRLMSIKVWRIITYCICTKISQKNQEGNKSLLSLLRTPFQMTLPYVNDPSAREGIIYHLLGVVYTAFTSNKNLSTDMFELFWDHLITPIYEDYVFKYDSIHLQNVLFTVLHLLIGGKNADVALERKYKKHIHPMSVIASEGVKLKDISSLPPQIIKREYDKIMKVVFQAVEVAISNVNLAHDLILTSLKHLPEDRKDQTHLESFSSLILKVTQNNKDTPIFRDFFGAVTSSFVYTFLDLFLRKNDSSLVNFNIQISKVGISQGNMTLDLLKDVIRKARNETSEFLIIEKFLELDDKKTEVYAQNWVGSTLLPPNISFREFQSLANIVNKVPNENSIENFLDLCLKLSFPVNLFTLLHVSMWSNNNFIYFIQSYVSKNENKLNVDLITLLKTSLPGNPELFSGLLPFLRRNKFMDILEYCIHSNPNLLNSIPDLNSDLLLKLLPRSRASYFAANIKLFKCSEQLTLVRWLLKGQQLEQLNQNFSEIENVLQNASDSELEKSEIIRELLHLAMANPIEPLFSGLLNFCIKNNMADHLDEFCGNMTSEVLFKISPELLLKLLTYKEKPNGKLLAAVIEKIENGDDDYILELLEKIIIQKEIQILEKLKEPLLVFFLNPVSSNMQKHKKSTNMLRELVLLYLTKPLSRSAAKKFFSMLISILPPNPNYQTIDMVNLLIDLIKSHNRKFKDKRTYNATLKTIGKWIQESGVVHQGDSSKEIEAIPDTKSMYIPCEGSENKLSNLQRKVDSQDIQVPATQGMKEPPSSIQISSQISAKDSDSISLKNTAIMNSSQQESHANRSRSIDDETLEEVDNESIREIDQQMKSTQLDKNVANHSNICSTKSDEVDVTELHESIDTQSSEVNAYQPIEVLTSELKAVTNRSIKTNPDHNVVNSDNPLKRPSKETPTSENKRSKGHETMVDVLVSEEQAVSPSSDVICTNIKSIANEESSLALRNSIKVETNCNENSLNVTLDLDQQTITKEDGKGQVEHVQRQENQESMNKINSKSFTQDNIAQYKSVKKARPNNEGENNDYACNVEQASPVRNEVPGDGIQIPSGTILLNSSKQTEKSKVDDLRSDEDEHGTVAQEKHQVGAINSRNKNNDRMDSTPIQGTEEESREVVMTEEGINVRLEDSGTCELNKNLKGPLKGDKDANINDDFVPVEENVRDEGFLKSMEHAVSKETGLEEQPEVADISVLPEIRIPIFNSLKMQGSKSQIKEKLKKRLQRNELMPPDSPPRMTENTNINAQNGLDTVPKTIGGKEKHHEIQLGQAHTEADGEPLLGGDGNEDATSREATPSLKVHFFSKKSRRLVARLRGFTPGDLNGISVEERRNLRIELLDFMMRLEYYSNRDNDMN.

The span at 1 to 26 shows a compositional bias: basic and acidic residues; that stretch reads MSKDFSDKKKHTIDRIDQHILRRSQH. The segment at 1–71 is disordered; it reads MSKDFSDKKK…RRKLASSSDC (71 aa). The span at 27 to 37 shows a compositional bias: polar residues; sequence DNYSNGSSPWM. Phosphoserine is present on Ser-97. 6 disordered regions span residues 126–149, 1314–1372, 1441–1476, 1606–1678, 1789–1811, and 1829–1854; these read PIYRIPGSSPKPSPSSKPGKSILR, PATQ…EEVD, RSIKTNPDHNVVNSDNPLKRPSKETPTSENKRSKGH, EVPG…EESR, ELMPPDSPPRMTENTNINAQNGL, and LGQAHTEADGEPLLGGDGNEDATSRE. Over residues 1324–1334 the composition is skewed to low complexity; that stretch reads SSIQISSQISA. Over residues 1342 to 1355 the composition is skewed to polar residues; that stretch reads LKNTAIMNSSQQES. Residues 1615 to 1625 show a composition bias toward polar residues; the sequence is PSGTILLNSSK. Positions 1626-1635 are enriched in basic and acidic residues; the sequence is QTEKSKVDDL. Phosphoserine occurs at positions 1637 and 1795. Residues 1800–1811 show a composition bias toward polar residues; it reads TENTNINAQNGL. The residue at position 1852 (Ser-1852) is a Phosphoserine.

The protein belongs to the RIF1 family. As to quaternary structure, interacts with RAP1 (via C-terminus). Interacts with RIF2.

It localises to the nucleus. The protein localises to the chromosome. It is found in the telomere. Functionally, negatively regulates telomere length by preventing telomere elongation or promoting degradation of the telomere ends. Recruited to telomeres by interaction with the C-terminus of RAP1, which binds directly to telomeric repeat DNA. This may create a negative feedback loop in which the addition of new telomere repeats creates binding sites for inhibitors of telomere length extension. May also influence the balance of transcriptional silencing at telomeres and the silent mating type locus HMR, which is mediated by SIR (Silent Information Regulator) proteins including SIR3 and SIR4. RIF1 competes with SIR proteins for binding to the C-terminus of RAP1. In the absence of RIF1, a limiting cellular pool of SIR proteins may preferentially associate with RAP1 at sub-telomeric loci, causing enhanced telomeric silencing and attenuated silencing of the HMR locus. The protein is Telomere length regulator protein RIF1 (RIF1) of Saccharomyces cerevisiae (strain ATCC 204508 / S288c) (Baker's yeast).